We begin with the raw amino-acid sequence, 1102 residues long: Endocytosis protein end4 (1102 aa).

Positions 9 to 139 constitute an ENTH domain; sequence DHMQSDASLM…SFHAQHPEFN (131 aa). The tract at residues 265–334 is disordered; it reads PHDPPDLEGD…SEPEPIQDFW (70 aa). Residues 292–305 are compositionally biased toward polar residues; it reads TGASTIAPQPTGTS. Residues 338 to 661 adopt a coiled-coil conformation; it reads TLDQQLAAQQ…ESLLQLSKLQ (324 aa). Residues 858 to 1100 enclose the I/LWEQ domain; that stretch reads LLNAPGENIE…DMRKTSYHVA (243 aa).

This sequence belongs to the SLA2 family.

It is found in the cytoplasm. Its subcellular location is the cytoskeleton. Its function is as follows. Required for cellular morphogenesis and polarization of the cortical cytoskeleton. Required for establishment of new polarized growth zones where it acts in actin organization. Involved plasma membrane internalization and is essential for fluid-phase endocytosis. This chain is Endocytosis protein end4 (end4), found in Schizosaccharomyces pombe (strain 972 / ATCC 24843) (Fission yeast).